A 247-amino-acid chain; its full sequence is UPF0280 protein Mevan_0550 (247 aa).

The protein belongs to the UPF0280 family.

This is UPF0280 protein Mevan_0550 from Methanococcus vannielii (strain ATCC 35089 / DSM 1224 / JCM 13029 / OCM 148 / SB).